The primary structure comprises 251 residues: 3-deoxy-manno-octulosonate cytidylyltransferase (251 aa).

The protein belongs to the KdsB family.

Its subcellular location is the cytoplasm. It carries out the reaction 3-deoxy-alpha-D-manno-oct-2-ulosonate + CTP = CMP-3-deoxy-beta-D-manno-octulosonate + diphosphate. Its pathway is nucleotide-sugar biosynthesis; CMP-3-deoxy-D-manno-octulosonate biosynthesis; CMP-3-deoxy-D-manno-octulosonate from 3-deoxy-D-manno-octulosonate and CTP: step 1/1. It functions in the pathway bacterial outer membrane biogenesis; lipopolysaccharide biosynthesis. Its function is as follows. Activates KDO (a required 8-carbon sugar) for incorporation into bacterial lipopolysaccharide in Gram-negative bacteria. This is 3-deoxy-manno-octulosonate cytidylyltransferase from Parabacteroides distasonis (strain ATCC 8503 / DSM 20701 / CIP 104284 / JCM 5825 / NCTC 11152).